The chain runs to 436 residues: UDP-glucuronate 4-epimerase 5 (436 aa).

Helical transmembrane passes span 36-56 and 95-115; these read LTLW…LSPP and GLTV…SIAL. 97–128 contributes to the NAD(+) binding site; that stretch reads TVLVTGASGFVGTHVSIALRRRGDGVLGLDNF. The Proton acceptor role is filled by Y247.

This sequence belongs to the NAD(P)-dependent epimerase/dehydratase family. In terms of assembly, homodimer. In terms of tissue distribution, in leaves, pollen and siliques, but not in roots or flowers.

The protein resides in the golgi apparatus. It localises to the golgi stack membrane. The enzyme catalyses UDP-alpha-D-glucuronate = UDP-alpha-D-galacturonate. Its function is as follows. Involved in the synthesis of the negatively charged monosaccharide that forms the backbone of pectic cell wall components. The protein is UDP-glucuronate 4-epimerase 5 (GAE5) of Arabidopsis thaliana (Mouse-ear cress).